A 235-amino-acid polypeptide reads, in one-letter code: Deoxyribose-phosphate aldolase (235 aa).

Asp-107 functions as the Proton donor/acceptor in the catalytic mechanism. The active-site Schiff-base intermediate with acetaldehyde is Lys-167. Catalysis depends on Lys-197, which acts as the Proton donor/acceptor.

It belongs to the DeoC/FbaB aldolase family. DeoC type 1 subfamily. In terms of assembly, homotetramer.

The protein resides in the cytoplasm. The catalysed reaction is 2-deoxy-D-ribose 5-phosphate = D-glyceraldehyde 3-phosphate + acetaldehyde. It functions in the pathway carbohydrate degradation; 2-deoxy-D-ribose 1-phosphate degradation; D-glyceraldehyde 3-phosphate and acetaldehyde from 2-deoxy-alpha-D-ribose 1-phosphate: step 2/2. Its function is as follows. Catalyzes a reversible aldol reaction between acetaldehyde and D-glyceraldehyde 3-phosphate to generate 2-deoxy-D-ribose 5-phosphate. This is Deoxyribose-phosphate aldolase from Aeropyrum pernix (strain ATCC 700893 / DSM 11879 / JCM 9820 / NBRC 100138 / K1).